A 921-amino-acid polypeptide reads, in one-letter code: Isoleucine--tRNA ligase (921 aa).

Residues 57-67 carry the 'HIGH' region motif; sequence PYANGDIHMGH. Residue Glu-552 participates in L-isoleucyl-5'-AMP binding. A 'KMSKS' region motif is present at residues 593 to 597; sequence KMSKS. Position 596 (Lys-596) interacts with ATP. Zn(2+) is bound by residues Cys-888, Cys-891, Cys-908, and Cys-911.

This sequence belongs to the class-I aminoacyl-tRNA synthetase family. IleS type 1 subfamily. Monomer. It depends on Zn(2+) as a cofactor.

The protein localises to the cytoplasm. The catalysed reaction is tRNA(Ile) + L-isoleucine + ATP = L-isoleucyl-tRNA(Ile) + AMP + diphosphate. Catalyzes the attachment of isoleucine to tRNA(Ile). As IleRS can inadvertently accommodate and process structurally similar amino acids such as valine, to avoid such errors it has two additional distinct tRNA(Ile)-dependent editing activities. One activity is designated as 'pretransfer' editing and involves the hydrolysis of activated Val-AMP. The other activity is designated 'posttransfer' editing and involves deacylation of mischarged Val-tRNA(Ile). The protein is Isoleucine--tRNA ligase of Bacillus cereus (strain AH820).